The primary structure comprises 150 residues: MVHATSPLLLLLLLSLALVAPGLSARKCSLTGKWDNDLGSIMTIGAVNDNGEFNGTYITAVADNPGNITRSPLLGIQHKRACQPTFGFTVHWNFSESTSVFVGQCFVDKSGKEVLKTKWLQRLAVDDISDDWKATRVGNNDFTRQRTVEE.

An N-terminal signal peptide occupies residues 1–24 (MVHATSPLLLLLLLSLALVAPGLS). Positions 26 to 147 (RKCSLTGKWD…GNNDFTRQRT (122 aa)) constitute an Avidin-like domain. Cys28 and Cys105 are joined by a disulfide. The biotin site is built by Asn36 and Ser40. The N-linked (GlcNAc...) asparagine glycan is linked to Asn54. The biotin site is built by Tyr57, Thr59, and Asp63. N-linked (GlcNAc...) asparagine glycans are attached at residues Asn67 and Asn93. Biotin contacts are provided by Ser95, Ser99, and Asn140.

It belongs to the avidin/streptavidin family. Homotetramer. Post-translationally, glycosylated.

It is found in the secreted. Its function is as follows. Forms a strong non-covalent specific complex with biotin. This is Avidin-related protein 1 (AVR1) from Gallus gallus (Chicken).